A 306-amino-acid polypeptide reads, in one-letter code: 2-dehydro-3-deoxy-D-gluconate/2-dehydro-3-deoxy-phosphogluconate aldolase (306 aa).

Residues 61–62 (TT), 148–150 (YNY), and 173–175 (KDT) each bind substrate. Catalysis depends on Lys173, which acts as the Schiff-base intermediate with substrate.

Belongs to the DapA family. KDPG aldolase subfamily. As to quaternary structure, homotetramer; dimer of dimers.

It catalyses the reaction 2-dehydro-3-deoxy-6-phospho-D-gluconate = D-glyceraldehyde 3-phosphate + pyruvate. The catalysed reaction is 2-dehydro-3-deoxy-D-gluconate = D-glyceraldehyde + pyruvate. The protein operates within carbohydrate acid metabolism; 2-dehydro-3-deoxy-D-gluconate degradation; D-glyceraldehyde 3-phosphate and pyruvate from 2-dehydro-3-deoxy-D-gluconate: step 2/2. Involved in the degradation of glucose via the Entner-Doudoroff pathway. Catalyzes the reversible cleavage of 2-keto-3-deoxy-6-phosphogluconate (KDPG) and 2-keto-3-deoxygluconate (KDG) forming pyruvate and glyceraldehyde 3-phosphate or glyceraldehyde, respectively. It is not able to use 2-keto-3-deoxy-6-phosphogalactonate (KDPGal) and 2-keto-3-deoxygalactonate (KDGal) as substrate. In Thermoproteus tenax, this protein is 2-dehydro-3-deoxy-D-gluconate/2-dehydro-3-deoxy-phosphogluconate aldolase (kdgA).